Consider the following 232-residue polypeptide: Small ribosomal subunit protein uS3 (232 aa).

The KH type-2 domain occupies 39-107 (VRQYLTKELK…PAQINIAEVR (69 aa)).

This sequence belongs to the universal ribosomal protein uS3 family. As to quaternary structure, part of the 30S ribosomal subunit. Forms a tight complex with proteins S10 and S14.

In terms of biological role, binds the lower part of the 30S subunit head. Binds mRNA in the 70S ribosome, positioning it for translation. The polypeptide is Small ribosomal subunit protein uS3 (Aliivibrio salmonicida (strain LFI1238) (Vibrio salmonicida (strain LFI1238))).